Here is a 114-residue protein sequence, read N- to C-terminus: Large ribosomal subunit protein uL22 (114 aa).

Belongs to the universal ribosomal protein uL22 family. As to quaternary structure, part of the 50S ribosomal subunit.

Functionally, this protein binds specifically to 23S rRNA; its binding is stimulated by other ribosomal proteins, e.g. L4, L17, and L20. It is important during the early stages of 50S assembly. It makes multiple contacts with different domains of the 23S rRNA in the assembled 50S subunit and ribosome. The globular domain of the protein is located near the polypeptide exit tunnel on the outside of the subunit, while an extended beta-hairpin is found that lines the wall of the exit tunnel in the center of the 70S ribosome. The sequence is that of Large ribosomal subunit protein uL22 from Streptococcus pyogenes serotype M6 (strain ATCC BAA-946 / MGAS10394).